Here is a 585-residue protein sequence, read N- to C-terminus: Folylpolyglutamate synthase, mitochondrial (585 aa).

Residues 1 to 39 (MSRARCHALFLAAVSPRGATTRVAVRRGLSAWPVLQEPD) constitute a mitochondrion transit peptide. 103-106 (GKGS) provides a ligand contact to ATP. Mg(2+) contacts are provided by serine 127, glutamate 198, and histidine 226. Residues arginine 361 and aspartate 375 each contribute to the ATP site. A disordered region spans residues 477–497 (EEQVSPDPWSTPGQEQDGPAS). Phosphoserine is present on serine 537.

This sequence belongs to the folylpolyglutamate synthase family. In terms of assembly, monomer. The cofactor is a monovalent cation.

It localises to the mitochondrion inner membrane. The protein localises to the mitochondrion matrix. It is found in the cytoplasm. The catalysed reaction is (6S)-5,6,7,8-tetrahydrofolyl-(gamma-L-Glu)(n) + L-glutamate + ATP = (6S)-5,6,7,8-tetrahydrofolyl-(gamma-L-Glu)(n+1) + ADP + phosphate + H(+). Its pathway is cofactor biosynthesis; tetrahydrofolylpolyglutamate biosynthesis. In terms of biological role, catalyzes conversion of folates to polyglutamate derivatives allowing concentration of folate compounds in the cell and the intracellular retention of these cofactors, which are important substrates for most of the folate-dependent enzymes that are involved in one-carbon transfer reactions involved in purine, pyrimidine and amino acid synthesis. This is Folylpolyglutamate synthase, mitochondrial (FPGS) from Bos taurus (Bovine).